Consider the following 467-residue polypeptide: tRNA-2-methylthio-N(6)-dimethylallyladenosine synthase (467 aa).

Residues 1–20 form a disordered region; it reads MSDDTTQIEPAMAQETSPRA. The MTTase N-terminal domain occupies 23-143; that stretch reads RKVFVKTYGC…LPNALARVRG (121 aa). Residues Cys32, Cys68, Cys106, Cys184, Cys188, and Cys191 each contribute to the [4Fe-4S] cluster site. A Radical SAM core domain is found at 170 to 402; the sequence is RKRGVSAFLT…QALLSAQQYA (233 aa). The 63-residue stretch at 405-467 folds into the TRAM domain; the sequence is DSMIGRKMDV…TNSLIAQKLA (63 aa).

This sequence belongs to the methylthiotransferase family. MiaB subfamily. In terms of assembly, monomer. Requires [4Fe-4S] cluster as cofactor.

Its subcellular location is the cytoplasm. The catalysed reaction is N(6)-dimethylallyladenosine(37) in tRNA + (sulfur carrier)-SH + AH2 + 2 S-adenosyl-L-methionine = 2-methylsulfanyl-N(6)-dimethylallyladenosine(37) in tRNA + (sulfur carrier)-H + 5'-deoxyadenosine + L-methionine + A + S-adenosyl-L-homocysteine + 2 H(+). Catalyzes the methylthiolation of N6-(dimethylallyl)adenosine (i(6)A), leading to the formation of 2-methylthio-N6-(dimethylallyl)adenosine (ms(2)i(6)A) at position 37 in tRNAs that read codons beginning with uridine. This Brucella canis (strain ATCC 23365 / NCTC 10854 / RM-666) protein is tRNA-2-methylthio-N(6)-dimethylallyladenosine synthase.